The following is a 174-amino-acid chain: ATP-dependent protease subunit HslV (174 aa).

T4 is an active-site residue. Na(+) is bound by residues A159, C162, and T165.

Belongs to the peptidase T1B family. HslV subfamily. In terms of assembly, a double ring-shaped homohexamer of HslV is capped on each side by a ring-shaped HslU homohexamer. The assembly of the HslU/HslV complex is dependent on binding of ATP.

Its subcellular location is the cytoplasm. The enzyme catalyses ATP-dependent cleavage of peptide bonds with broad specificity.. Allosterically activated by HslU binding. Protease subunit of a proteasome-like degradation complex believed to be a general protein degrading machinery. In Moorella thermoacetica (strain ATCC 39073 / JCM 9320), this protein is ATP-dependent protease subunit HslV.